We begin with the raw amino-acid sequence, 890 residues long: DNA mismatch repair protein MutS (890 aa).

646–653 (GPNMAGKS) provides a ligand contact to ATP.

This sequence belongs to the DNA mismatch repair MutS family.

This protein is involved in the repair of mismatches in DNA. It is possible that it carries out the mismatch recognition step. This protein has a weak ATPase activity. The sequence is that of DNA mismatch repair protein MutS from Hyphomonas neptunium (strain ATCC 15444).